The primary structure comprises 405 residues: Arginine biosynthesis bifunctional protein ArgJ (405 aa).

The substrate site is built by Thr-155, Lys-181, Thr-192, Glu-278, Asn-400, and Thr-405. Residue Thr-192 is the Nucleophile of the active site.

The protein belongs to the ArgJ family. In terms of assembly, heterotetramer of two alpha and two beta chains.

The protein resides in the cytoplasm. The catalysed reaction is N(2)-acetyl-L-ornithine + L-glutamate = N-acetyl-L-glutamate + L-ornithine. The enzyme catalyses L-glutamate + acetyl-CoA = N-acetyl-L-glutamate + CoA + H(+). The protein operates within amino-acid biosynthesis; L-arginine biosynthesis; L-ornithine and N-acetyl-L-glutamate from L-glutamate and N(2)-acetyl-L-ornithine (cyclic): step 1/1. It participates in amino-acid biosynthesis; L-arginine biosynthesis; N(2)-acetyl-L-ornithine from L-glutamate: step 1/4. Functionally, catalyzes two activities which are involved in the cyclic version of arginine biosynthesis: the synthesis of N-acetylglutamate from glutamate and acetyl-CoA as the acetyl donor, and of ornithine by transacetylation between N(2)-acetylornithine and glutamate. This Dehalococcoides mccartyi (strain CBDB1) protein is Arginine biosynthesis bifunctional protein ArgJ.